Reading from the N-terminus, the 274-residue chain is Dermonecrotic toxin SdSicTox-betaIIB1biii (274 aa).

Residue His-5 is part of the active site. Mg(2+) contacts are provided by Glu-25 and Asp-27. His-41 functions as the Nucleophile in the catalytic mechanism. Disulfide bonds link Cys-45-Cys-51 and Cys-47-Cys-190. Mg(2+) is bound at residue Asp-85.

This sequence belongs to the arthropod phospholipase D family. Class II subfamily. Mg(2+) serves as cofactor. In terms of tissue distribution, expressed by the venom gland.

It is found in the secreted. It carries out the reaction an N-(acyl)-sphingosylphosphocholine = an N-(acyl)-sphingosyl-1,3-cyclic phosphate + choline. The catalysed reaction is an N-(acyl)-sphingosylphosphoethanolamine = an N-(acyl)-sphingosyl-1,3-cyclic phosphate + ethanolamine. It catalyses the reaction a 1-acyl-sn-glycero-3-phosphocholine = a 1-acyl-sn-glycero-2,3-cyclic phosphate + choline. The enzyme catalyses a 1-acyl-sn-glycero-3-phosphoethanolamine = a 1-acyl-sn-glycero-2,3-cyclic phosphate + ethanolamine. Functionally, dermonecrotic toxins cleave the phosphodiester linkage between the phosphate and headgroup of certain phospholipids (sphingolipid and lysolipid substrates), forming an alcohol (often choline) and a cyclic phosphate. This toxin acts on sphingomyelin (SM). It may also act on ceramide phosphoethanolamine (CPE), lysophosphatidylcholine (LPC) and lysophosphatidylethanolamine (LPE), but not on lysophosphatidylserine (LPS), and lysophosphatidylglycerol (LPG). It acts by transphosphatidylation, releasing exclusively cyclic phosphate products as second products. Induces dermonecrosis, hemolysis, increased vascular permeability, edema, inflammatory response, and platelet aggregation. The polypeptide is Dermonecrotic toxin SdSicTox-betaIIB1biii (Sicarius cf. damarensis (strain GJB-2008) (Six-eyed sand spider)).